Here is a 607-residue protein sequence, read N- to C-terminus: MNKQELENRQKKIRNFSIIAHIDHGKSTLADRILEKTGALTAREMKEQTLDAMDLERERGITIKLNAVKLNYTAKDGEEYILHLIDTPGHVDFTYEVSRSLAACEGAILVVDAAQGIEAQTLANVYLALDNDLEIIPVINKIDLPSADVERVRQEIEDVIGLDASDAVPTSAKAGIGIEEILEQIVELVPPPTGDPSEPLQALIFDSYYDAYRGVVASIRIVNGSVKVGDKVQMMATGKTFEVTDLGVSTPKPISVKELNVGDVGTLSASIKTVGDVRVGDTITLAKNPATSQLPGYRKMNPMVYCGLYPIDAAKYNDLREALEKLQLSDAALEFEPETSQALGFGFRCGFLGMLHMEIIQERIEREFNIDLITTAPSVIYHVTTTSGEVIHVDNPSKMPEQQKVDSIEEPYVKAAVMTPNDYVGAIMELCQKKRGTFIDMQYIDTTRVKITYEIPLSEIVYDFFDQLKSSTKGYASLDYELIGYRQSRLVKMDILLNNEVVDALSFIVHRDFAYERGKVIVEKLKALIPRMQFEVPVQAAVGTKIVARSTIKALRKNVLAKCYGGDISRKRKLLEKQKEGKKRMKMVGSVEVPQEAFMSVLSMDEE.

The 183-residue stretch at 11–193 (KKIRNFSIIA…QIVELVPPPT (183 aa)) folds into the tr-type G domain. Residues 23–28 (DHGKST) and 140–143 (NKID) each bind GTP.

Belongs to the TRAFAC class translation factor GTPase superfamily. Classic translation factor GTPase family. LepA subfamily.

The protein localises to the cell membrane. It catalyses the reaction GTP + H2O = GDP + phosphate + H(+). Its function is as follows. Required for accurate and efficient protein synthesis under certain stress conditions. May act as a fidelity factor of the translation reaction, by catalyzing a one-codon backward translocation of tRNAs on improperly translocated ribosomes. Back-translocation proceeds from a post-translocation (POST) complex to a pre-translocation (PRE) complex, thus giving elongation factor G a second chance to translocate the tRNAs correctly. Binds to ribosomes in a GTP-dependent manner. In Exiguobacterium sp. (strain ATCC BAA-1283 / AT1b), this protein is Elongation factor 4.